Consider the following 113-residue polypeptide: CRISPR-associated endoribonuclease Cas2 (113 aa).

Asp33 is a Mg(2+) binding site.

It belongs to the CRISPR-associated endoribonuclease Cas2 protein family. In terms of assembly, homodimer, forms a heterotetramer with a Cas1 homodimer. It depends on Mg(2+) as a cofactor.

Functionally, CRISPR (clustered regularly interspaced short palindromic repeat), is an adaptive immune system that provides protection against mobile genetic elements (viruses, transposable elements and conjugative plasmids). CRISPR clusters contain sequences complementary to antecedent mobile elements and target invading nucleic acids. CRISPR clusters are transcribed and processed into CRISPR RNA (crRNA). Functions as a ssRNA-specific endoribonuclease. Involved in the integration of spacer DNA into the CRISPR cassette. The type III-A Csm effector complex binds crRNA and acts as a crRNA-guided RNase, DNase and cyclic oligoadenylate synthase; binding of target RNA cognate to the crRNA is required for all activities. The polypeptide is CRISPR-associated endoribonuclease Cas2 (Mycobacterium tuberculosis (strain CDC 1551 / Oshkosh)).